We begin with the raw amino-acid sequence, 715 residues long: Lactococcin-A transport/processing ATP-binding protein LcnC (715 aa).

Positions 11 to 138 (QVDEMDCGCA…SEWTGISLFL (128 aa)) constitute a Peptidase C39 domain. The active site involves Cys17. Helical transmembrane passes span 167 to 187 (VILN…LGSY), 197 to 217 (IPNA…LTYI), 237 to 257 (LAID…MSFF), 282 to 302 (TILS…ILGL), 307 to 327 (LFLL…IFTP), and 396 to 416 (AIIQ…LVIS). An ABC transmembrane type-1 domain is found at 168 to 450 (ILNIVIASFI…IINLQTKLQK (283 aa)). In terms of domain architecture, ABC transporter spans 482-715 (LNMSDISYQY…NGFYEQLYHN (234 aa)). 515–522 (GMSGSGKS) is an ATP binding site.

Belongs to the ABC transporter superfamily. Bacteriocin (lactococcin) exporter (TC 3.A.1.112.3) family.

Its subcellular location is the cell membrane. In terms of biological role, involved in the export process of the bacteriocin lactococcin A. The chain is Lactococcin-A transport/processing ATP-binding protein LcnC (lcnC) from Lactococcus lactis subsp. lactis (Streptococcus lactis).